The following is a 236-amino-acid chain: Endonuclease V (236 aa).

The Mg(2+) site is built by aspartate 47 and aspartate 115.

This sequence belongs to the endonuclease V family. Requires Mg(2+) as cofactor.

It is found in the cytoplasm. The enzyme catalyses Endonucleolytic cleavage at apurinic or apyrimidinic sites to products with a 5'-phosphate.. In terms of biological role, DNA repair enzyme involved in the repair of deaminated bases. Selectively cleaves double-stranded DNA at the second phosphodiester bond 3' to a deoxyinosine leaving behind the intact lesion on the nicked DNA. In Xanthomonas campestris pv. campestris (strain 8004), this protein is Endonuclease V.